The following is a 357-amino-acid chain: Serine proteinase inhibitor 1 (357 aa).

The protein belongs to the serpin family. Poxviruses subfamily.

The protein localises to the host cytoplasm. Plays a role in mediating viral host range. May act to inhibit a caspase independent form of apoptosis to allow efficient virus replication in infected cells. In Monkeypox virus, this protein is Serine proteinase inhibitor 1 (OPG208).